We begin with the raw amino-acid sequence, 176 residues long: Large ribosomal subunit protein uL6 (176 aa).

The protein belongs to the universal ribosomal protein uL6 family. Part of the 50S ribosomal subunit.

Its function is as follows. This protein binds to the 23S rRNA, and is important in its secondary structure. It is located near the subunit interface in the base of the L7/L12 stalk, and near the tRNA binding site of the peptidyltransferase center. In Lactobacillus acidophilus (strain ATCC 700396 / NCK56 / N2 / NCFM), this protein is Large ribosomal subunit protein uL6.